A 370-amino-acid polypeptide reads, in one-letter code: Mitogen-activated protein kinase 3 (370 aa).

One can recognise a Protein kinase domain in the interval 38 to 324 (RPPIIPIGRG…VEQALNHQYL (287 aa)). Residues 44-52 (IGRGAYGIV) and Lys-67 each bind ATP. Catalysis depends on Asp-164, which acts as the Proton acceptor. Phosphothreonine is present on Thr-196. The short motif at 196–198 (TEY) is the TXY element. Position 198 is a phosphotyrosine (Tyr-198). Thr-201 is modified (phosphothreonine).

This sequence belongs to the protein kinase superfamily. CMGC Ser/Thr protein kinase family. MAP kinase subfamily. In terms of assembly, interacts with DSPTP1B/MKP2, NDPK2 and VIP1. The interaction with DSPTP1B/MKP2 is repressed by fungal elicitation. Binds to LIP5. Interacts with VQ4. Interacts with RACK1A, RACK1B and RACK1C. Interacts with FLZ9. Interacts with MKK5. Post-translationally, dually phosphorylated on Thr-196 and Tyr-198, which activates the enzyme. Dephosphorylated by DSPTP1B/MKP2.

The protein resides in the cytoplasm. Its subcellular location is the nucleus. It localises to the cell cortex. The enzyme catalyses L-seryl-[protein] + ATP = O-phospho-L-seryl-[protein] + ADP + H(+). It carries out the reaction L-threonyl-[protein] + ATP = O-phospho-L-threonyl-[protein] + ADP + H(+). With respect to regulation, activated by threonine and tyrosine phosphorylation. Activated by MAP kinase kinases MKK4, MKK5, MKK7 and MKK9. Activated in response to hydrogen peroxide, ozone, salt stress and flagellin bacterial elicitor. Triggered by Agrobacterium upon T-DNA transfer. Repressed by DSPTP1B/MKP2-mediated dephosphorylation. In terms of biological role, involved in oxidative stress-mediated signaling cascade (such as ozone). Involved in the innate immune MAP kinase signaling cascade (MEKK1, MKK4/MKK5 and MPK3/MPK6) downstream of bacterial flagellin receptor FLS2. May be involved in hypersensitive response (HR)-mediated signaling cascade by modulating LIP5 phosphorylation and subsequent multivesicular bodies (MVBs) trafficking. May phosphorylate regulators of WRKY transcription factors. Mediates the phosphorylation of VIP1 and subsequent stress genes transcription in response to Agrobacterium. MKK9-MPK3/MPK6 module phosphorylates and activates EIN3, leading to the promotion of EIN3-mediated transcription in ethylene signaling. MPK3/MPK6 cascade regulates camalexin synthesis through transcriptional regulation of the biosynthetic genes after pathogen infection. YDA-MKK4/MKK5-MPK3/MPK6 module regulates stomatal cell fate before the guard mother cell (GMC) is specified. When activated, reinforces the feedback loop by phosphorylating BASL, and inhibits stomatal fate by phosphorylating SPCH. This MAPK cascade also functions downstream of the ER receptor in regulating coordinated local cell proliferation, which shapes the morphology of plant organs. In Arabidopsis thaliana (Mouse-ear cress), this protein is Mitogen-activated protein kinase 3.